A 191-amino-acid polypeptide reads, in one-letter code: Adenylate kinase (191 aa).

10–15 (GAGKGT) is an ATP binding site. Positions 30–59 (STGDIFRANVTEGTPLGVEAKRYMDAGEYV) are NMP. Residues Thr-31, Arg-36, 57–59 (EYV), 85–88 (GYPR), and Gln-92 contribute to the AMP site. The LID stretch occupies residues 126–136 (QRAQVEGRADD). Arg-127 serves as a coordination point for ATP. AMP-binding residues include Arg-133 and Arg-144. Gly-172 lines the ATP pocket.

The protein belongs to the adenylate kinase family. As to quaternary structure, monomer.

The protein resides in the cytoplasm. The catalysed reaction is AMP + ATP = 2 ADP. It participates in purine metabolism; AMP biosynthesis via salvage pathway; AMP from ADP: step 1/1. In terms of biological role, catalyzes the reversible transfer of the terminal phosphate group between ATP and AMP. Plays an important role in cellular energy homeostasis and in adenine nucleotide metabolism. In Nocardioides sp. (strain ATCC BAA-499 / JS614), this protein is Adenylate kinase.